The following is a 90-amino-acid chain: RNA-binding protein Hfq (90 aa).

Positions 10-70 (DGFLNLLRRE…LSTITPARPL (61 aa)) constitute a Sm domain.

The protein belongs to the Hfq family. Homohexamer.

In terms of biological role, RNA chaperone that binds small regulatory RNA (sRNAs) and mRNAs to facilitate mRNA translational regulation in response to envelope stress, environmental stress and changes in metabolite concentrations. Also binds with high specificity to tRNAs. In Symbiobacterium thermophilum (strain DSM 24528 / JCM 14929 / IAM 14863 / T), this protein is RNA-binding protein Hfq.